A 302-amino-acid chain; its full sequence is Endochitinase 4 (302 aa).

The N-terminal stretch at 1–18 is a signal peptide; the sequence is EFTALSLLFSLLLLTASA. One can recognise a Chitin-binding type-1 domain in the interval 19–60; the sequence is EQCGKQAGGARCAAGLCCSNFGWCGNTNDYCGPGKCQSQCPS. Intrachain disulfides connect Cys-21–Cys-36, Cys-30–Cys-42, Cys-35–Cys-49, and Cys-54–Cys-58. Residues 59 to 79 are disordered; that stretch reads PSGPSPKPPTPGPGPSGGDIG. The span at 61-72 shows a compositional bias: pro residues; the sequence is GPSPKPPTPGPG. Catalysis depends on Glu-144, which acts as the Proton donor. An intrachain disulfide couples Cys-162 to Cys-182.

This sequence belongs to the glycosyl hydrolase 19 family. Chitinase class I subfamily.

Its subcellular location is the vacuole. The enzyme catalyses Random endo-hydrolysis of N-acetyl-beta-D-glucosaminide (1-&gt;4)-beta-linkages in chitin and chitodextrins.. Defense against chitin-containing fungal pathogens. The sequence is that of Endochitinase 4 (CHTB4) from Solanum tuberosum (Potato).